The following is a 244-amino-acid chain: NAD-dependent protein deacetylase (244 aa).

One can recognise a Deacetylase sirtuin-type domain in the interval 1–244 (MDDKINKLKE…IGKVLGKVID (244 aa)). 8 residues coordinate NAD(+): alanine 24, threonine 28, phenylalanine 35, arginine 36, glutamine 105, isoleucine 107, aspartate 108, and histidine 123. Phenylalanine 35 provides a ligand contact to nicotinamide. Residues isoleucine 107 and aspartate 108 each coordinate nicotinamide. The Proton acceptor role is filled by histidine 123. Residues cysteine 131, cysteine 134, cysteine 152, and cysteine 155 each coordinate Zn(2+). NAD(+)-binding residues include threonine 193, serine 194, asparagine 217, and isoleucine 235.

Belongs to the sirtuin family. Class U subfamily. The cofactor is Zn(2+).

The protein localises to the cytoplasm. It catalyses the reaction N(6)-acetyl-L-lysyl-[protein] + NAD(+) + H2O = 2''-O-acetyl-ADP-D-ribose + nicotinamide + L-lysyl-[protein]. Its function is as follows. NAD-dependent protein deacetylase which modulates the activities of several enzymes which are inactive in their acetylated form. This is NAD-dependent protein deacetylase from Clostridium perfringens (strain 13 / Type A).